Consider the following 367-residue polypeptide: Riboflavin biosynthesis protein VVA0006 (367 aa).

Position 215–219 (215–219 (RLHSE)) interacts with GTP. Residues Cys220, Cys231, and Cys233 each coordinate Zn(2+). Residues Gln236, 258–260 (EGR), and Thr280 contribute to the GTP site. Asp292 (proton acceptor) is an active-site residue. The Nucleophile role is filled by Arg294. Residues Thr315 and Lys320 each coordinate GTP.

In the N-terminal section; belongs to the YbiA family. It in the C-terminal section; belongs to the GTP cyclohydrolase II family. It depends on Zn(2+) as a cofactor.

It carries out the reaction 2,5-diamino-6-hydroxy-4-(5-phosphoribosylamino)-pyrimidine + H2O = 2,5,6-triamino-4-hydroxypyrimidine + D-ribose 5-phosphate. The enzyme catalyses 5-amino-6-(5-phospho-D-ribosylamino)uracil + H2O = 5,6-diaminouracil + D-ribose 5-phosphate. It catalyses the reaction GTP + 4 H2O = 2,5-diamino-6-hydroxy-4-(5-phosphoribosylamino)-pyrimidine + formate + 2 phosphate + 3 H(+). Its pathway is cofactor biosynthesis; riboflavin biosynthesis; 5-amino-6-(D-ribitylamino)uracil from GTP: step 1/4. Functionally, catalyzes the hydrolysis of the N-glycosidic bond in the first two intermediates of riboflavin biosynthesis, which are highly reactive metabolites, yielding relatively innocuous products. Thus, can divert a surplus of harmful intermediates into relatively harmless products and pre-empt the damage these intermediates would otherwise do. Has no activity against GTP, nucleoside monophosphates or ADP-ribose. Catalyzes the conversion of GTP to 2,5-diamino-6-ribosylamino-4(3H)-pyrimidinone 5'-phosphate (DARP), formate and pyrophosphate. In Vibrio vulnificus (strain YJ016), this protein is Riboflavin biosynthesis protein VVA0006.